The following is a 67-amino-acid chain: Type 3 secretion system chaperone PscE (67 aa).

Residues 16 to 37 (HAAALRQRLQAALAECRRELAR) adopt a coiled-coil conformation.

The protein belongs to the YscE family. In terms of assembly, forms a stable ternary complex with PscF/SctF and PscG within the cytoplasm. Co-stabilized by PscG.

It is found in the cytoplasm. Chaperone of the type III secretion system (T3SS), also called injectisome, which is used to inject bacterial effector proteins into eukaryotic host cells, facilitating the establishment and dissemination of infection. Along with PscG, prevents premature polymerization of the PscF/SctF needle protein within the cytoplasm. Required for type III secretion needle assembly. Also required for cytotoxicity by influencing PscF/SctF levels. The polypeptide is Type 3 secretion system chaperone PscE (pscE) (Pseudomonas aeruginosa (strain ATCC 15692 / DSM 22644 / CIP 104116 / JCM 14847 / LMG 12228 / 1C / PRS 101 / PAO1)).